The chain runs to 152 residues: Small ribosomal subunit protein uS15 (152 aa).

A compositionally biased stretch (basic residues) spans 1–11 (MAKMHTKRKGK). Residues 1 to 24 (MAKMHTKRKGKSSSTRPNRTEPPE) are disordered.

The protein belongs to the universal ribosomal protein uS15 family. As to quaternary structure, part of the 30S ribosomal subunit.

This chain is Small ribosomal subunit protein uS15, found in Methanosarcina mazei (strain ATCC BAA-159 / DSM 3647 / Goe1 / Go1 / JCM 11833 / OCM 88) (Methanosarcina frisia).